Reading from the N-terminus, the 234-residue chain is Cell adhesion molecule CEACAM15 (234 aa).

The first 32 residues, 1 to 32, serve as a signal peptide directing secretion; it reads MGAETMESPSLFLCKGLLLTASLLICWNWSTA. N-linked (GlcNAc...) asparagine glycosylation is found at asparagine 28, asparagine 75, asparagine 151, and asparagine 184. Positions 146-226 constitute an Ig-like C2-type domain; the sequence is PYLQLNHTRL…NSFSSKKSYP (81 aa). A disulfide bridge links cysteine 165 with cysteine 213.

It belongs to the immunoglobulin superfamily. CEA family. Detected in placenta.

This Mus musculus (Mouse) protein is Cell adhesion molecule CEACAM15.